The following is a 629-amino-acid chain: tRNA uridine 5-carboxymethylaminomethyl modification enzyme MnmG (629 aa).

FAD-binding positions include 13–18 (GGGHAG), V125, and S180. Residue 273-287 (GPRYCPSIEDKVMRF) coordinates NAD(+). An FAD-binding site is contributed by Q370.

This sequence belongs to the MnmG family. Homodimer. Heterotetramer of two MnmE and two MnmG subunits. The cofactor is FAD.

Its subcellular location is the cytoplasm. In terms of biological role, NAD-binding protein involved in the addition of a carboxymethylaminomethyl (cmnm) group at the wobble position (U34) of certain tRNAs, forming tRNA-cmnm(5)s(2)U34. The sequence is that of tRNA uridine 5-carboxymethylaminomethyl modification enzyme MnmG from Escherichia coli O45:K1 (strain S88 / ExPEC).